The chain runs to 693 residues: Endoprotease bli (693 aa).

The signal sequence occupies residues 1 to 20 (MYWQLVRILVLFDCLQKILA). Positions 21-116 (IEHDSICIAD…EQRPRVRRKR (96 aa)) are cleaved as a propeptide — inhibition peptide. Residue Asp-161 coordinates Ca(2+). A Peptidase S8 domain is found at 167 to 482 (QWYLNNGAQG…YGLMDAGALV (316 aa)). Asn-194 carries N-linked (GlcNAc...) asparagine glycosylation. Residue Asp-201 is the Charge relay system of the active site. Position 202 (Asp-202) interacts with substrate. Asp-210, Asp-222, Asp-227, and Asp-229 together coordinate Ca(2+). Residues 215-242 (YDPLASTDINGHDDDPTPQDDGDNKHGT) are disordered. 237–238 (DN) contributes to the substrate binding site. The Charge relay system role is filled by His-240. Ca(2+) contacts are provided by Ile-251, Asn-254, Tyr-256, and Gly-258. 2 cysteine pairs are disulfide-bonded: Cys-257-Cys-406 and Cys-349-Cys-379. Residues Glu-282, 299–304 (SWGPED), Asp-310, and 338–341 (ASGN) each bind substrate. Ca(2+) is bound at residue Asp-304. Residue Asp-347 participates in Ca(2+) binding. 2 residues coordinate substrate: Asp-352 and Tyr-354. Ca(2+) is bound at residue Glu-377. Ser-414 functions as the Charge relay system in the catalytic mechanism. Ser-414 provides a ligand contact to substrate. N-linked (GlcNAc...) asparagine glycans are attached at residues Asn-433 and Asn-518. A P/Homo B domain is found at 490 to 628 (TVPEQHICTY…SLLLYGTAEP (139 aa)). Cys-497 and Cys-526 are disulfide-bonded. Residues 629–693 (AQPNDPRHSS…LVSAQPELRV (65 aa)) are disordered. The span at 668–681 (DSRDWQPKKVENKK) shows a compositional bias: basic and acidic residues.

This sequence belongs to the peptidase S8 family. Furin subfamily. Ca(2+) is required as a cofactor. N-glycosylated. In terms of processing, the inhibition peptide, which plays the role of an intramolecular chaperone, is probably autocatalytically removed in the endoplasmic reticulum (ER) and remains non-covalently bound as a potent autoinhibitor. Probably following transport to the trans Golgi, a second cleavage within the inhibition propeptide results in propeptide dissociation and bli activation.

It localises to the secreted. It carries out the reaction Release of mature proteins from their proproteins by cleavage of -Arg-Xaa-Yaa-Arg-|-Zaa- bonds, where Xaa can be any amino acid and Yaa is Arg or Lys. Releases albumin, complement component C3 and von Willebrand factor from their respective precursors.. With respect to regulation, inhibited by the propeptide before the second cleavage. Inhibited by ethylenediaminetetraacetic acid (EDTA), ZnSO(4) and chloroketone DEC-RVKR-CMK. Serine endoprotease which cleaves substrates at the RX(K/R)R consensus motif. The sequence is that of Endoprotease bli from Onchocerca volvulus.